A 730-amino-acid chain; its full sequence is Probable G-protein coupled receptor 149 (730 aa).

At 1-34 (MSFFLSNLTNDSRLWKVSHNSTDLMNSPETLTLS) the chain is on the extracellular side. Residues Asn-7, Asn-10, and Asn-20 are each glycosylated (N-linked (GlcNAc...) asparagine). Residues 35-55 (LFCLICLMTLVALVGSIFSLV) form a helical membrane-spanning segment. Topologically, residues 56 to 68 (SLLTMQYRTVVSM) are cytoplasmic. Residues 69–89 (LVTSWSVDDLLSVLSVAIFMV) form a helical membrane-spanning segment. Residues 90–108 (LQWPREAPGYFQSLCTTSA) are Extracellular-facing. A disulfide bridge connects residues Cys-104 and Cys-181. The helical transmembrane segment at 109–131 (LLYMCQGLSSNLKATLIVFYNFY) threads the bilayer. The Cytoplasmic portion of the chain corresponds to 132–148 (TMHRTVVSQSSSWRSGQ). Residues 149-169 (VLGVALTVWAVSLLLASLPLC) traverse the membrane as a helical segment. The Extracellular segment spans residues 170-188 (GWGVFVRTPWGCLTDCSSP). A helical transmembrane segment spans residues 189–209 (YVLLLFAVYASAFGLLAVLSV). Residues 210–308 (PLTHQLLCSE…SFPVSLAQKR (99 aa)) lie on the Cytoplasmic side of the membrane. Residues 309-329 (FALILALTKVILWLPMMIHMV) form a helical membrane-spanning segment. At 330 to 340 (VKHVVGFQSLP) the chain is on the extracellular side. Residues 341 to 361 (VDMLSFLLTLLASTVTPVFVL) form a helical membrane-spanning segment. The Cytoplasmic segment spans residues 362-730 (SKRWAHLPCG…RKREAESKGN (369 aa)).

It belongs to the G-protein coupled receptor 1 family. Expressed exclusively in brain and testis.

It is found in the cell membrane. Its function is as follows. Orphan receptor. The protein is Probable G-protein coupled receptor 149 (Gpr149) of Rattus norvegicus (Rat).